Here is a 67-residue protein sequence, read N- to C-terminus: Large ribosomal subunit protein bL35 (67 aa).

It belongs to the bacterial ribosomal protein bL35 family.

This chain is Large ribosomal subunit protein bL35, found in Sphingopyxis alaskensis (strain DSM 13593 / LMG 18877 / RB2256) (Sphingomonas alaskensis).